A 609-amino-acid polypeptide reads, in one-letter code: Proteasome-associated ATPase (609 aa).

Residues 1–27 (MGSSERSEAFGTPRESDMSSGDEAELE) form a disordered region. Positions 17 to 96 (DMSSGDEAEL…LREEVDRLGQ (80 aa)) form a coiled coil. 296–301 (GCGKTL) is an ATP binding site. Residues 608–609 (YL) form a docks into pockets in the proteasome alpha-ring region.

This sequence belongs to the AAA ATPase family. Homohexamer. Assembles into a hexameric ring structure that caps the 20S proteasome core. Strongly interacts with the prokaryotic ubiquitin-like protein Pup through a hydrophobic interface; the interacting region of ARC lies in its N-terminal coiled-coil domain. There is one Pup binding site per ARC hexamer ring. Upon ATP-binding, the C-terminus of ARC interacts with the alpha-rings of the proteasome core, possibly by binding to the intersubunit pockets.

It participates in protein degradation; proteasomal Pup-dependent pathway. Its function is as follows. ATPase which is responsible for recognizing, binding, unfolding and translocation of pupylated proteins into the bacterial 20S proteasome core particle. May be essential for opening the gate of the 20S proteasome via an interaction with its C-terminus, thereby allowing substrate entry and access to the site of proteolysis. Thus, the C-termini of the proteasomal ATPase may function like a 'key in a lock' to induce gate opening and therefore regulate proteolysis. This chain is Proteasome-associated ATPase, found in Mycobacterium avium (strain 104).